The chain runs to 96 residues: Large ribosomal subunit protein uL23 (96 aa).

This sequence belongs to the universal ribosomal protein uL23 family. In terms of assembly, part of the 50S ribosomal subunit. Contacts protein L29, and trigger factor when it is bound to the ribosome.

One of the early assembly proteins it binds 23S rRNA. One of the proteins that surrounds the polypeptide exit tunnel on the outside of the ribosome. Forms the main docking site for trigger factor binding to the ribosome. The sequence is that of Large ribosomal subunit protein uL23 from Bacillus cytotoxicus (strain DSM 22905 / CIP 110041 / 391-98 / NVH 391-98).